A 55-amino-acid polypeptide reads, in one-letter code: ATP synthase protein 8 (55 aa).

The helical transmembrane segment at 7-28 (ISWFFNFLLAWFFLFIVVTILL) threads the bilayer.

Belongs to the ATPase protein 8 family. In terms of assembly, F-type ATPases have 2 components, CF(1) - the catalytic core - and CF(0) - the membrane proton channel.

It is found in the mitochondrion membrane. Its function is as follows. Mitochondrial membrane ATP synthase (F(1)F(0) ATP synthase or Complex V) produces ATP from ADP in the presence of a proton gradient across the membrane which is generated by electron transport complexes of the respiratory chain. F-type ATPases consist of two structural domains, F(1) - containing the extramembraneous catalytic core and F(0) - containing the membrane proton channel, linked together by a central stalk and a peripheral stalk. During catalysis, ATP synthesis in the catalytic domain of F(1) is coupled via a rotary mechanism of the central stalk subunits to proton translocation. Part of the complex F(0) domain. Minor subunit located with subunit a in the membrane. This chain is ATP synthase protein 8 (MT-ATP8), found in Pisaster ochraceus (Ochre sea star).